The chain runs to 533 residues: Sterol 26-hydroxylase, mitochondrial (533 aa).

Residues 1-32 (MAVLSRMRLRWALLDTRVMGHGLCPQGARAKA) constitute a mitochondrion transit peptide. The interval 38 to 58 (LRDHESTEGPGTGQDRPRLRS) is disordered. N6-acetyllysine occurs at positions 142 and 375. Residues 386-400 (PLLKAVIKETLRLYP) are sterol-binding. Heme is bound at residue C479. An N6-acetyllysine mark is found at K512 and K523.

It belongs to the cytochrome P450 family. Interacts with HSP70; this interaction is required for initial targeting to mitochondria. Heme is required as a cofactor. Expressed in liver, kidney and ovary.

The protein resides in the mitochondrion inner membrane. The enzyme catalyses 5beta-cholestane-3alpha,7alpha,12alpha-triol + 6 reduced [adrenodoxin] + 3 O2 + 5 H(+) = (25R)-3alpha,7alpha,12alpha-trihydroxy-5beta-cholestan-26-oate + 6 oxidized [adrenodoxin] + 4 H2O. The catalysed reaction is cholestanol + 2 reduced [adrenodoxin] + O2 + 2 H(+) = (25R)-26-hydroxycholestanol + 2 oxidized [adrenodoxin] + H2O. It carries out the reaction (25R)-3beta-hydroxycholest-5-en-7-one-26-al + 2 reduced [adrenodoxin] + O2 + H(+) = (25R)-3beta-hydroxycholest-5-en-7-one-26-oate + 2 oxidized [adrenodoxin] + H2O. It catalyses the reaction (25R)-3beta,26-dihydroxycholest-5-en-7-one + 2 reduced [adrenodoxin] + O2 + 2 H(+) = (25R)-3beta-hydroxycholest-5-en-7-one-26-al + 2 oxidized [adrenodoxin] + 2 H2O. The enzyme catalyses 7-oxocholesterol + 2 reduced [adrenodoxin] + O2 + 2 H(+) = (25R)-3beta,26-dihydroxycholest-5-en-7-one + 2 oxidized [adrenodoxin] + H2O. The catalysed reaction is calciol + 2 reduced [adrenodoxin] + O2 + 2 H(+) = calcidiol + 2 oxidized [adrenodoxin] + H2O. It carries out the reaction (25R)-5beta-cholestane-3alpha,7alpha,12alpha,26-tetrol + 2 reduced [adrenodoxin] + O2 + 2 H(+) = (25R)-3alpha,7alpha,12alpha-trihydroxy-5beta-cholestan-26-al + 2 oxidized [adrenodoxin] + 2 H2O. It catalyses the reaction 2 reduced [adrenodoxin] + cholesterol + O2 + 2 H(+) = (25R)-cholest-5-ene-3beta,26-diol + 2 oxidized [adrenodoxin] + H2O. The enzyme catalyses (25R)-3beta,4beta-dihydroxycholest-5-en-26-al + 2 reduced [adrenodoxin] + O2 + H(+) = (25R)-3beta,4beta-dihydroxycholest-5-en-26-oate + 2 oxidized [adrenodoxin] + H2O. The catalysed reaction is (25R)-4beta,26-dihydroxycholesterol + 2 reduced [adrenodoxin] + O2 + 2 H(+) = (25R)-3beta,4beta-dihydroxycholest-5-en-26-al + 2 oxidized [adrenodoxin] + 2 H2O. It carries out the reaction 4beta-hydroxycholesterol + 2 reduced [adrenodoxin] + O2 + 2 H(+) = (25R)-4beta,26-dihydroxycholesterol + 2 oxidized [adrenodoxin] + H2O. It catalyses the reaction (25R)-3beta-hydroxy-5-cholesten-26-al + 2 reduced [adrenodoxin] + O2 + H(+) = (25R)-3beta-hydroxy-5-cholestenoate + 2 oxidized [adrenodoxin] + H2O. The enzyme catalyses (25R)-cholest-5-ene-3beta,26-diol + 2 reduced [adrenodoxin] + O2 + 2 H(+) = (25R)-3beta-hydroxy-5-cholesten-26-al + 2 oxidized [adrenodoxin] + 2 H2O. The catalysed reaction is (25R)-3alpha,7alpha,12alpha-trihydroxy-5beta-cholestan-26-al + 2 reduced [adrenodoxin] + O2 + H(+) = (25R)-3alpha,7alpha,12alpha-trihydroxy-5beta-cholestan-26-oate + 2 oxidized [adrenodoxin] + H2O. It carries out the reaction 5beta-cholestane-3alpha,7alpha,12alpha-triol + 2 reduced [adrenodoxin] + O2 + 2 H(+) = (25R)-5beta-cholestane-3alpha,7alpha,12alpha,26-tetrol + 2 oxidized [adrenodoxin] + H2O. It functions in the pathway hormone biosynthesis; cholecalciferol biosynthesis. The protein operates within steroid metabolism; cholesterol degradation. It participates in lipid metabolism; bile acid biosynthesis. Functionally, cytochrome P450 monooxygenase that catalyzes regio- and stereospecific hydroxylation of cholesterol and its derivatives. Hydroxylates (with R stereochemistry) the terminal methyl group of cholesterol side-chain in a three step reaction to yield at first a C26 alcohol, then a C26 aldehyde and finally a C26 acid. Regulates cholesterol homeostasis by catalyzing the conversion of excess cholesterol to bile acids via both the 'neutral' (classic) and the 'acid' (alternative) pathways. May also regulate cholesterol homeostasis via generation of active oxysterols, which act as ligands for NR1H2 and NR1H3 nuclear receptors, modulating the transcription of genes involved in lipid metabolism. Plays a role in cholestanol metabolism in the cerebellum. Similarly to cholesterol, hydroxylates cholestanol and may facilitate sterol diffusion through the blood-brain barrier to the systemic circulation for further degradation. Also hydroxylates retinal 7-ketocholesterol, a noxious oxysterol with pro-inflammatory and pro-apoptotic effects, and may play a role in its elimination from the retinal pigment epithelium. May play a redundant role in vitamin D biosynthesis. Catalyzes 25-hydroxylation of vitamin D3 that is required for its conversion to a functionally active form. The polypeptide is Sterol 26-hydroxylase, mitochondrial (Cyp27a1) (Rattus norvegicus (Rat)).